Consider the following 776-residue polypeptide: Endonuclease MutS2 (776 aa).

330 to 337 (GPNTGGKT) provides a ligand contact to ATP. In terms of domain architecture, Smr spans 701–776 (LDLRGMRYEE…GSGATIAILK (76 aa)).

Belongs to the DNA mismatch repair MutS family. MutS2 subfamily. As to quaternary structure, homodimer. Binds to stalled ribosomes, contacting rRNA.

Functionally, endonuclease that is involved in the suppression of homologous recombination and thus may have a key role in the control of bacterial genetic diversity. Acts as a ribosome collision sensor, splitting the ribosome into its 2 subunits. Detects stalled/collided 70S ribosomes which it binds and splits by an ATP-hydrolysis driven conformational change. Acts upstream of the ribosome quality control system (RQC), a ribosome-associated complex that mediates the extraction of incompletely synthesized nascent chains from stalled ribosomes and their subsequent degradation. Probably generates substrates for RQC. The chain is Endonuclease MutS2 from Lactococcus lactis subsp. cremoris (strain SK11).